We begin with the raw amino-acid sequence, 352 residues long: Photosystem II D2 protein (352 aa).

A helical transmembrane segment spans residues 40-60 (CAYLALGGWLTGTTFVTSWYT). H117 serves as a coordination point for chlorophyll a. Residues 124–140 (GFMLRQFEIARLVGVRP) form a helical membrane-spanning segment. The pheophytin a site is built by Q129 and N142. A helical membrane pass occupies residues 152 to 165 (VFVSVFLIYPLGQS). H197 serves as a coordination point for chlorophyll a. The helical transmembrane segment at 207–227 (GALLCAIHGATVENTLYKDGE) threads the bilayer. The a plastoquinone site is built by H214 and F261. A Fe cation-binding site is contributed by H214. H268 contacts Fe cation. Residues 278–294 (GLWMSSIGVVGLALNLR) form a helical membrane-spanning segment.

This sequence belongs to the reaction center PufL/M/PsbA/D family. In terms of assembly, PSII is composed of 1 copy each of membrane proteins PsbA, PsbB, PsbC, PsbD, PsbE, PsbF, PsbH, PsbI, PsbJ, PsbK, PsbL, PsbM, PsbT, PsbX, PsbY, PsbZ, Psb30/Ycf12, peripheral proteins PsbO, CyanoQ (PsbQ), PsbU, PsbV and a large number of cofactors. It forms dimeric complexes. The cofactor is The D1/D2 heterodimer binds P680, chlorophylls that are the primary electron donor of PSII, and subsequent electron acceptors. It shares a non-heme iron and each subunit binds pheophytin, quinone, additional chlorophylls, carotenoids and lipids. There is also a Cl(-1) ion associated with D1 and D2, which is required for oxygen evolution. The PSII complex binds additional chlorophylls, carotenoids and specific lipids..

The protein localises to the cellular thylakoid membrane. It carries out the reaction 2 a plastoquinone + 4 hnu + 2 H2O = 2 a plastoquinol + O2. Photosystem II (PSII) is a light-driven water:plastoquinone oxidoreductase that uses light energy to abstract electrons from H(2)O, generating O(2) and a proton gradient subsequently used for ATP formation. It consists of a core antenna complex that captures photons, and an electron transfer chain that converts photonic excitation into a charge separation. The D1/D2 (PsbA/PsbD) reaction center heterodimer binds P680, the primary electron donor of PSII as well as several subsequent electron acceptors. D2 is needed for assembly of a stable PSII complex. This Synechococcus sp. (strain JA-3-3Ab) (Cyanobacteria bacterium Yellowstone A-Prime) protein is Photosystem II D2 protein.